Reading from the N-terminus, the 308-residue chain is ADP-L-glycero-D-manno-heptose-6-epimerase (308 aa).

Residues 10-11 (FI), 31-32 (DN), K38, K53, 75-79 (EGACS), and N92 contribute to the NADP(+) site. Residue Y139 is the Proton acceptor of the active site. NADP(+) is bound at residue K143. N168 lines the substrate pocket. V169 and K177 together coordinate NADP(+). The active-site Proton acceptor is K177. Substrate is bound by residues S179, H186, 200 to 203 (FAGS), R208, and Y271.

It belongs to the NAD(P)-dependent epimerase/dehydratase family. HldD subfamily. In terms of assembly, homopentamer. It depends on NADP(+) as a cofactor.

The catalysed reaction is ADP-D-glycero-beta-D-manno-heptose = ADP-L-glycero-beta-D-manno-heptose. The protein operates within nucleotide-sugar biosynthesis; ADP-L-glycero-beta-D-manno-heptose biosynthesis; ADP-L-glycero-beta-D-manno-heptose from D-glycero-beta-D-manno-heptose 7-phosphate: step 4/4. It participates in bacterial outer membrane biogenesis; LOS core biosynthesis. Its function is as follows. Catalyzes the interconversion between ADP-D-glycero-beta-D-manno-heptose and ADP-L-glycero-beta-D-manno-heptose via an epimerization at carbon 6 of the heptose. The protein is ADP-L-glycero-D-manno-heptose-6-epimerase of Haemophilus influenzae (strain ATCC 51907 / DSM 11121 / KW20 / Rd).